The primary structure comprises 121 residues: Large ribosomal subunit protein uL24 (121 aa).

It belongs to the universal ribosomal protein uL24 family. As to quaternary structure, part of the 50S ribosomal subunit.

Functionally, one of two assembly initiator proteins, it binds directly to the 5'-end of the 23S rRNA, where it nucleates assembly of the 50S subunit. In terms of biological role, located at the polypeptide exit tunnel on the outside of the subunit. The polypeptide is Large ribosomal subunit protein uL24 (Thermococcus kodakarensis (strain ATCC BAA-918 / JCM 12380 / KOD1) (Pyrococcus kodakaraensis (strain KOD1))).